A 601-amino-acid chain; its full sequence is Pyranose 2-oxidase (601 aa).

Position 151 is a tele-8alpha-FAD histidine (His151). Residues Gln406 and His408 each contribute to the substrate site. Catalysis depends on His505, which acts as the Proton acceptor. Asn558 is an active-site residue. The tract at residues 577 to 601 (KLGKKGSHSGNRDDGDVDTDTDDDA) is disordered. A compositionally biased stretch (acidic residues) spans 591–601 (GDVDTDTDDDA).

This sequence belongs to the GMC oxidoreductase family. In terms of assembly, homotetramer. The cofactor is FAD.

The catalysed reaction is D-glucose + O2 = 2-dehydro-D-glucose + H2O2. Its function is as follows. Catalyzes the oxidation of various aldopyranoses and disaccharides on carbon-2 to the corresponding 2-keto sugars concomitant with the reduction of O(2) to H(2)O(2). This Emericella nidulans (strain FGSC A4 / ATCC 38163 / CBS 112.46 / NRRL 194 / M139) (Aspergillus nidulans) protein is Pyranose 2-oxidase (p2ox).